The following is a 619-amino-acid chain: Teichoic acid poly(ribitol-phosphate) polymerase (619 aa).

Belongs to the CDP-glycerol glycerophosphotransferase family.

It localises to the cell membrane. The catalysed reaction is 4-O-[1-D-ribitylphospho-(2R)-1-glycerylphospho]-N-acetyl-beta-D-mannosaminyl-(1-&gt;4)-N-acetyl-alpha-D-glucosaminyl di-trans,octa-cis-undecaprenyl diphosphate + n CDP-L-ribitol = 4-O-[(D-ribitylphospho)(n)-D-ribitylphospho-(2R)-glycerylphospho]-N-acetyl-beta-D-mannosaminyl-(1-&gt;4)-N-acetyl-alpha-D-glucosaminyl di-trans,octa-cis-undecaprenyl diphosphate + n CMP + n H(+). It participates in cell wall biogenesis; poly(ribitol phosphate) teichoic acid biosynthesis. Responsible for the polymerization of the main chain of the major teichoic acid by sequential transfer of ribitol phosphate units from CDP-ribitol to the glycerol phosphate attached to the disaccharide linkage unit. Synthesizes polymers of up to 40 ribitol phosphate units in length. The protein is Teichoic acid poly(ribitol-phosphate) polymerase (tarL) of Bacillus spizizenii (strain ATCC 23059 / NRRL B-14472 / W23) (Bacillus subtilis subsp. spizizenii).